The sequence spans 276 residues: 2,3,4,5-tetrahydropyridine-2,6-dicarboxylate N-succinyltransferase (276 aa).

Residues R104 and D141 each coordinate substrate.

The protein belongs to the transferase hexapeptide repeat family. Homotrimer.

The protein resides in the cytoplasm. The catalysed reaction is (S)-2,3,4,5-tetrahydrodipicolinate + succinyl-CoA + H2O = (S)-2-succinylamino-6-oxoheptanedioate + CoA. The protein operates within amino-acid biosynthesis; L-lysine biosynthesis via DAP pathway; LL-2,6-diaminopimelate from (S)-tetrahydrodipicolinate (succinylase route): step 1/3. This chain is 2,3,4,5-tetrahydropyridine-2,6-dicarboxylate N-succinyltransferase, found in Pseudoalteromonas translucida (strain TAC 125).